The primary structure comprises 349 residues: 4-hydroxy-3-methylbut-2-en-1-yl diphosphate synthase (flavodoxin) (349 aa).

The [4Fe-4S] cluster site is built by Cys-264, Cys-267, Cys-299, and Glu-306.

It belongs to the IspG family. [4Fe-4S] cluster serves as cofactor.

The catalysed reaction is (2E)-4-hydroxy-3-methylbut-2-enyl diphosphate + oxidized [flavodoxin] + H2O + 2 H(+) = 2-C-methyl-D-erythritol 2,4-cyclic diphosphate + reduced [flavodoxin]. Its pathway is isoprenoid biosynthesis; isopentenyl diphosphate biosynthesis via DXP pathway; isopentenyl diphosphate from 1-deoxy-D-xylulose 5-phosphate: step 5/6. In terms of biological role, converts 2C-methyl-D-erythritol 2,4-cyclodiphosphate (ME-2,4cPP) into 1-hydroxy-2-methyl-2-(E)-butenyl 4-diphosphate. This chain is 4-hydroxy-3-methylbut-2-en-1-yl diphosphate synthase (flavodoxin), found in Clostridium tetani (strain Massachusetts / E88).